A 189-amino-acid chain; its full sequence is Ribosome maturation factor RimM (189 aa).

One can recognise a PRC barrel domain in the interval 113-189 (DGEYYWVDLL…TIVADWQPDY (77 aa)).

It belongs to the RimM family. In terms of assembly, binds ribosomal protein uS19.

It is found in the cytoplasm. An accessory protein needed during the final step in the assembly of 30S ribosomal subunit, possibly for assembly of the head region. Essential for efficient processing of 16S rRNA. May be needed both before and after RbfA during the maturation of 16S rRNA. It has affinity for free ribosomal 30S subunits but not for 70S ribosomes. The protein is Ribosome maturation factor RimM of Delftia acidovorans (strain DSM 14801 / SPH-1).